A 319-amino-acid chain; its full sequence is Homoserine O-acetyltransferase (319 aa).

Catalysis depends on Cys-142, which acts as the Acyl-thioester intermediate. Residues Lys-163 and Ser-192 each contribute to the substrate site. Catalysis depends on His-235, which acts as the Proton acceptor. Residue Glu-237 is part of the active site. Substrate is bound at residue Arg-249.

Belongs to the MetA family.

Its subcellular location is the cytoplasm. It carries out the reaction L-homoserine + acetyl-CoA = O-acetyl-L-homoserine + CoA. Its pathway is amino-acid biosynthesis; L-methionine biosynthesis via de novo pathway; O-acetyl-L-homoserine from L-homoserine: step 1/1. In terms of biological role, transfers an acetyl group from acetyl-CoA to L-homoserine, forming acetyl-L-homoserine. In Lactococcus lactis subsp. cremoris (strain MG1363), this protein is Homoserine O-acetyltransferase.